The following is a 392-amino-acid chain: Y' element ATP-dependent helicase YFL066C (392 aa).

Residues 1–175 form the Helicase ATP-binding domain; that stretch reads MADTPSVAVQ…LQRIGLTGLA (175 aa). 11–18 is a binding site for ATP; it reads APPGYGKT. A Helicase C-terminal domain is found at 232 to 381; that stretch reads KLLLALFEIE…EFYGLESKKG (150 aa).

This sequence belongs to the helicase family. Yeast subtelomeric Y' repeat subfamily.

Catalyzes DNA unwinding and is involved in telomerase-independent telomere maintenance. The protein is Y' element ATP-dependent helicase YFL066C of Saccharomyces cerevisiae (strain ATCC 204508 / S288c) (Baker's yeast).